A 171-amino-acid chain; its full sequence is Co-chaperone protein HscB homolog (171 aa).

The J domain maps to 2–74 (NHFELFGLPL…ISRAEYLLVQ (73 aa)).

Belongs to the HscB family. As to quaternary structure, interacts with HscA and stimulates its ATPase activity.

Functionally, co-chaperone involved in the maturation of iron-sulfur cluster-containing proteins. Seems to help targeting proteins to be folded toward HscA. The protein is Co-chaperone protein HscB homolog of Vibrio atlanticus (strain LGP32) (Vibrio splendidus (strain Mel32)).